Here is a 478-residue protein sequence, read N- to C-terminus: Chromosomal replication initiator protein DnaA (478 aa).

Residues Met-1–Tyr-71 are domain I, interacts with DnaA modulators. The segment at Tyr-71–Gly-136 is domain II. Residues Met-137 to Ala-353 form a domain III, AAA+ region region. Residues Gly-181, Gly-183, Lys-184, and Thr-185 each coordinate ATP. The tract at residues Glu-354 to Leu-478 is domain IV, binds dsDNA.

Belongs to the DnaA family. As to quaternary structure, oligomerizes as a right-handed, spiral filament on DNA at oriC.

The protein resides in the cytoplasm. Its function is as follows. Plays an essential role in the initiation and regulation of chromosomal replication. ATP-DnaA binds to the origin of replication (oriC) to initiate formation of the DNA replication initiation complex once per cell cycle. Binds the DnaA box (a 9 base pair repeat at the origin) and separates the double-stranded (ds)DNA. Forms a right-handed helical filament on oriC DNA; dsDNA binds to the exterior of the filament while single-stranded (ss)DNA is stabiized in the filament's interior. The ATP-DnaA-oriC complex binds and stabilizes one strand of the AT-rich DNA unwinding element (DUE), permitting loading of DNA polymerase. After initiation quickly degrades to an ADP-DnaA complex that is not apt for DNA replication. Binds acidic phospholipids. The chain is Chromosomal replication initiator protein DnaA from Chloroflexus aggregans (strain MD-66 / DSM 9485).